A 202-amino-acid chain; its full sequence is ATP synthase subunit b (202 aa).

Residues 9 to 29 (TTLSLCLAVCVVVIAVGTGWA) traverse the membrane as a helical segment.

This sequence belongs to the ATPase B chain family. In terms of assembly, F-type ATPases have 2 components, F(1) - the catalytic core - and F(0) - the membrane proton channel. F(1) has five subunits: alpha(3), beta(3), gamma(1), delta(1), epsilon(1). F(0) has three main subunits: a(1), b(2) and c(10-14). The alpha and beta chains form an alternating ring which encloses part of the gamma chain. F(1) is attached to F(0) by a central stalk formed by the gamma and epsilon chains, while a peripheral stalk is formed by the delta and b chains.

It localises to the cell inner membrane. Functionally, f(1)F(0) ATP synthase produces ATP from ADP in the presence of a proton or sodium gradient. F-type ATPases consist of two structural domains, F(1) containing the extramembraneous catalytic core and F(0) containing the membrane proton channel, linked together by a central stalk and a peripheral stalk. During catalysis, ATP synthesis in the catalytic domain of F(1) is coupled via a rotary mechanism of the central stalk subunits to proton translocation. Component of the F(0) channel, it forms part of the peripheral stalk, linking F(1) to F(0). This is ATP synthase subunit b from Pelobacter propionicus (strain DSM 2379 / NBRC 103807 / OttBd1).